The sequence spans 520 residues: GMP synthase [glutamine-hydrolyzing] (520 aa).

In terms of domain architecture, Glutamine amidotransferase type-1 spans 9 to 202; the sequence is SVLIVDFGSQ…IHNIAGIKGD (194 aa). Catalysis depends on Cys86, which acts as the Nucleophile. Catalysis depends on residues His176 and Glu178. The region spanning 203–395 is the GMPS ATP-PPase domain; it reads WSMSAYRQKA…LGLPDSFIGR (193 aa). 230–236 contacts ATP; sequence SGGVDSS.

As to quaternary structure, homodimer.

The enzyme catalyses XMP + L-glutamine + ATP + H2O = GMP + L-glutamate + AMP + diphosphate + 2 H(+). The protein operates within purine metabolism; GMP biosynthesis; GMP from XMP (L-Gln route): step 1/1. Its function is as follows. Catalyzes the synthesis of GMP from XMP. This chain is GMP synthase [glutamine-hydrolyzing], found in Rhizobium etli (strain CIAT 652).